The chain runs to 199 residues: NADH-quinone oxidoreductase subunit C (199 aa).

Belongs to the complex I 30 kDa subunit family. In terms of assembly, NDH-1 is composed of 14 different subunits. Subunits NuoB, C, D, E, F, and G constitute the peripheral sector of the complex.

It is found in the cell inner membrane. The catalysed reaction is a quinone + NADH + 5 H(+)(in) = a quinol + NAD(+) + 4 H(+)(out). Functionally, NDH-1 shuttles electrons from NADH, via FMN and iron-sulfur (Fe-S) centers, to quinones in the respiratory chain. The immediate electron acceptor for the enzyme in this species is believed to be ubiquinone. Couples the redox reaction to proton translocation (for every two electrons transferred, four hydrogen ions are translocated across the cytoplasmic membrane), and thus conserves the redox energy in a proton gradient. This is NADH-quinone oxidoreductase subunit C from Polynucleobacter necessarius subsp. necessarius (strain STIR1).